Here is a 1342-residue protein sequence, read N- to C-terminus: Cytokinesis protein sepH (1342 aa).

The segment covering Met1–Glu10 has biased composition (low complexity). Positions Met1–Met47 are disordered. The segment covering Gly11–Thr22 has biased composition (pro residues). A compositionally biased stretch (basic and acidic residues) spans Ser36–Met47. Residues Tyr61 to Ile308 form the Protein kinase domain. Residues Leu67–Val75 and Lys90 contribute to the ATP site. Asp180 (proton acceptor) is an active-site residue. 3 disordered regions span residues Asn336–Asn396, Ile441–Glu486, and Ala552–Lys591. Residues Lys369 to Asn379 are compositionally biased toward polar residues. Residues Phe658 to Thr695 are a coiled coil. Positions Ser1201–Pro1342 are disordered. Over residues Gly1207 to Ser1217 the composition is skewed to basic residues. Composition is skewed to polar residues over residues Thr1218–Lys1244 and Asp1273–Ser1290. Residues Arg1315–Gln1324 show a composition bias toward low complexity.

It belongs to the protein kinase superfamily. Ser/Thr protein kinase family. CDC7 subfamily. The cofactor is Mg(2+).

The enzyme catalyses L-seryl-[protein] + ATP = O-phospho-L-seryl-[protein] + ADP + H(+). It catalyses the reaction L-threonyl-[protein] + ATP = O-phospho-L-threonyl-[protein] + ADP + H(+). Required for early events during cytokinesis including localization of cytoskeletal components to the cytokinetic ring. In Aspergillus terreus (strain NIH 2624 / FGSC A1156), this protein is Cytokinesis protein sepH.